Here is a 424-residue protein sequence, read N- to C-terminus: Histidine--tRNA ligase (424 aa).

This sequence belongs to the class-II aminoacyl-tRNA synthetase family. In terms of assembly, homodimer.

It is found in the cytoplasm. The enzyme catalyses tRNA(His) + L-histidine + ATP = L-histidyl-tRNA(His) + AMP + diphosphate + H(+). In Shewanella pealeana (strain ATCC 700345 / ANG-SQ1), this protein is Histidine--tRNA ligase.